The following is a 116-amino-acid chain: Ino eighty subunit 4 (116 aa).

Over residues 1-15 (MSQESSVLSESQEQL) the composition is skewed to low complexity. 2 disordered regions span residues 1-40 (MSQESSVLSESQEQLANNPKIEDTSPPSANSRDNSKPVLP) and 70-116 (EERQ…GLDS). The span at 84–108 (KGSDDKATRKKEPADEDPEVKQLEK) shows a compositional bias: basic and acidic residues.

As to quaternary structure, component of the chromatin-remodeling INO80 complex, at least composed of ARP4, ARP5, ARP8, RVB1, RVB2, TAF14, NHP10, IES1, IES3, IES4, IES6, ACT1, IES2, IES5 and INO80.

Its subcellular location is the nucleus. This Saccharomyces cerevisiae (strain ATCC 204508 / S288c) (Baker's yeast) protein is Ino eighty subunit 4 (IES4).